A 1228-amino-acid polypeptide reads, in one-letter code: Serine/threonine-protein kinase CST20 (1228 aa).

The segment covering 1-18 (MSILSENNPTQTSITDPN) has biased composition (polar residues). Disordered regions lie at residues 1-382 (MSIL…TAHN) and 405-468 (NSTN…HSQE). Low complexity-rich tracts occupy residues 57–70 (NTTS…SLGS) and 95–123 (ESGS…NPES). Positions 148–159 (HQGDDSDNEKQY) are enriched in basic and acidic residues. Polar residues-rich tracts occupy residues 173-195 (DSYS…NNVS), 205-222 (TSSL…NENA), and 232-244 (PQVS…SFHD). Low complexity predominate over residues 246 to 255 (SSVISSSTSV). Polar residues-rich tracts occupy residues 260 to 275 (SNPT…SYKS) and 309 to 328 (DTLS…TLQG). Low complexity predominate over residues 347–367 (NTSATSRNTSGTSTSTVVKNS). A compositionally biased stretch (polar residues) spans 368-382 (RSGTSKLTSTSTAHN). Residues 437 to 466 (KVRGVFSSMFGKNKSTSSSSSSNSGSNSHS) show a composition bias toward low complexity. The CRIB domain occupies 473–486 (ISTPFNAKHLAHVG). Disordered stretches follow at residues 543-829 (FHFD…ALAD) and 865-917 (LREK…KQAA). Residues 548–559 (NKSSSSGWSNEN) are compositionally biased toward polar residues. Residues 568-579 (SNSGSGGGGGGA) show a composition bias toward gly residues. Over residues 602–611 (ITPSQSMPTK) the composition is skewed to polar residues. Residues 612–626 (TESKQSENQHPHEDN) are compositionally biased toward basic and acidic residues. Residues 627 to 640 (ATQYTPRTPTSHVQ) are compositionally biased toward polar residues. Low complexity-rich tracts occupy residues 668-681 (PSSQ…SQSD), 693-708 (ISPS…SKSL), and 734-747 (SIPK…SLSS). The span at 748 to 759 (QLRPATNGSTTA) shows a compositional bias: polar residues. A compositionally biased stretch (pro residues) spans 787 to 805 (APPPPPSASPAPPVPPAPP). Residues 809–824 (LSEQTSEIPQQRTAPS) show a composition bias toward polar residues. The span at 865 to 874 (LREKNERQNR) shows a compositional bias: basic and acidic residues. The segment covering 875–890 (QQETGQNNADTASGGS) has biased composition (polar residues). The 253-residue stretch at 951–1203 (YVDLVKIGQG…ADELLHDNFI (253 aa)) folds into the Protein kinase domain. ATP contacts are provided by residues 957 to 965 (IGQGASGGV) and Lys-981. Residue Asp-1071 is the Proton acceptor of the active site.

It belongs to the protein kinase superfamily. STE Ser/Thr protein kinase family. STE20 subfamily.

Its subcellular location is the cytoplasm. The protein localises to the nucleus. The enzyme catalyses L-seryl-[protein] + ATP = O-phospho-L-seryl-[protein] + ADP + H(+). The catalysed reaction is L-threonyl-[protein] + ATP = O-phospho-L-threonyl-[protein] + ADP + H(+). Its function is as follows. MAP4K component of the MAPK pathway required for the mating pheromone response, and the regulation of cell polarity and cell cycle. Phosphorylates histone H2B to form H2BS10ph. Required for hyphal formation and virulence. The chain is Serine/threonine-protein kinase CST20 (CST20) from Candida albicans (strain SC5314 / ATCC MYA-2876) (Yeast).